A 111-amino-acid polypeptide reads, in one-letter code: Large ribosomal subunit protein uL24 (111 aa).

Over residues 48 to 65 the composition is skewed to basic and acidic residues; that stretch reads EKPSRSNREGGRTEREAP. The interval 48 to 111 is disordered; that stretch reads EKPSRSNREG…AKTTGEELDD (64 aa). Residues 69–80 are compositionally biased toward polar residues; it reads SNVNPIDSNGES. Positions 86 to 95 are enriched in basic and acidic residues; it reads KKVEDPDTGR.

It belongs to the universal ribosomal protein uL24 family. In terms of assembly, part of the 50S ribosomal subunit.

Functionally, one of two assembly initiator proteins, it binds directly to the 5'-end of the 23S rRNA, where it nucleates assembly of the 50S subunit. In terms of biological role, one of the proteins that surrounds the polypeptide exit tunnel on the outside of the subunit. The protein is Large ribosomal subunit protein uL24 of Salinibacter ruber (strain DSM 13855 / M31).